The chain runs to 160 residues: Ribosome maturation factor RimP (160 aa).

This sequence belongs to the RimP family.

Its subcellular location is the cytoplasm. Required for maturation of 30S ribosomal subunits. This is Ribosome maturation factor RimP from Cronobacter sakazakii (strain ATCC BAA-894) (Enterobacter sakazakii).